The primary structure comprises 1353 residues: Inhibitor of Bruton tyrosine kinase (1353 aa).

ANK repeat units follow at residues 51 to 80 (FGRN…DLLV) and 85 to 114 (SGWT…SLYI). RCC1 repeat units lie at residues 141–194 (PTDV…FLSQ), 195–246 (KGQV…VLTE), and 248–301 (GCVY…LWTR). BTB domains follow at residues 564–644 (HDVT…DFLT) and 768–836 (CDVT…VVIK). Residues 806-835 (SSCAALEMPIHSDILKVILDYLYTDEAVVI) form an ANK 3 repeat. The tract at residues 970–1001 (HSETMFKKAKTKAKKKPRKRSDSSGGYNLSDI) is disordered. The segment covering 976 to 988 (KKAKTKAKKKPRK) has biased composition (basic residues). At S990 the chain carries Phosphoserine. Over residues 992–1001 (SSGGYNLSDI) the composition is skewed to polar residues. Phosphoserine occurs at positions 1004, 1030, 1033, 1039, 1045, 1054, 1083, 1111, 1113, and 1116. The disordered stretch occupies residues 1134–1155 (KCGATPKSHLGKTVSHGVKLSQ).

Interacts with the PH domain of BTK. Isoform 2 does not interact with BTK. In terms of tissue distribution, expressed in DeFew, HEK293T, HeLa and in Jurkat, MC3 and NB4 lymphoid cells (at protein level). Isoform 1 is the predominant isoform expressed in all examined tissues and cell lines. Highly expressed in hemopoietic tissues (fetal liver, spleen, lymph node, thymus, peripheral blood leukocytes and bone marrow). Weakly or not expressed in other tissues.

The protein localises to the cytoplasm. The protein resides in the membrane. It is found in the nucleus. In terms of biological role, acts as an inhibitor of BTK tyrosine kinase activity, thereby playing a role in B-cell development. Down-regulates BTK kinase activity, leading to interference with BTK-mediated calcium mobilization and NF-kappa-B-driven transcription. The sequence is that of Inhibitor of Bruton tyrosine kinase (IBTK) from Homo sapiens (Human).